Here is a 104-residue protein sequence, read N- to C-terminus: L-rhamnose mutarotase (104 aa).

Residue tyrosine 18 participates in substrate binding. Catalysis depends on histidine 22, which acts as the Proton donor. Residues tyrosine 41 and 76–77 contribute to the substrate site; that span reads WW.

Belongs to the rhamnose mutarotase family. In terms of assembly, homodimer.

The protein resides in the cytoplasm. The catalysed reaction is alpha-L-rhamnose = beta-L-rhamnose. It functions in the pathway carbohydrate metabolism; L-rhamnose metabolism. Involved in the anomeric conversion of L-rhamnose. This chain is L-rhamnose mutarotase, found in Sinorhizobium fredii (strain NBRC 101917 / NGR234).